A 322-amino-acid chain; its full sequence is Pyrroline-5-carboxylate reductase (322 aa).

The next 2 helical transmembrane spans lie at tyrosine 9–leucine 29 and isoleucine 117–tryptophan 137. The disordered stretch occupies residues leucine 302–alanine 322. An N-linked (GlcNAc...) asparagine glycan is attached at asparagine 313.

Belongs to the pyrroline-5-carboxylate reductase family.

The protein resides in the membrane. It carries out the reaction L-proline + NADP(+) = (S)-1-pyrroline-5-carboxylate + NADPH + 2 H(+). It catalyses the reaction L-proline + NAD(+) = (S)-1-pyrroline-5-carboxylate + NADH + 2 H(+). It functions in the pathway alkaloid biosynthesis. Its function is as follows. Pyrroline-5-carboxylate reductase; part of the gene cluster that mediates the biosynthesis of paraherquamide, a fungal indole alkaloid that belongs to a family of natural products containing a characteristic bicyclo[2.2.2]diazaoctane core. The first steps in the biosynthesis of paraherquamide is the production of the beta-methyl-proline precursor from L-isoleucine. They require oxidation of a terminally hydroxylated L-isoleucine to the corresponding aldehyde by enzymes which have still to be identified. Spontaneous cyclization and dehydration would yield the 4-methyl pyrolline-5-carboxylic acid, which is then reduced by the pyrroline-5-carboxylate reductase phqD leading to the beta-methyl-proline precursor. The next step of paraherquamide biosynthesis involves coupling of beta-methyl-proline and L-tryptophan by the bimodular NRPS phqB, to produce a monooxopiperazine intermediate. The reductase (R) domain of phqB utilizes NADPH for hydride transfer to reduce the thioester bond of the T domain-tethered linear dipeptide to a hemithioaminal intermediate, which spontaneously cleaves the C-S bond to release the aldehyde product. This compound undergoes spontaneous cyclization and dehydration to give a dienamine which is reverse prenylated at C-2 by the reverse prenyltransferase phqJ. The other prenyltransferase present in the cluster, phqI may be a redundant gene in the pathway. During biosynthetic assembly, the key step to produce the polycyclic core is catalyzed by the bifunctional reductase and intramolecular [4+2] Diels-Alderase, phqE, resulting in formation of the [2.2.2] diazaoctane intermediate preparaherquamide. Following formation of preparaherquamide, an indole 2,3-epoxidation-initiated pinacol-like rearrangement is catalyzed by the phqK FAD-dependent monooxygenase. The prenyltransferase phqA, the cytochrome P450 monooxygenase phqL, and the FAD-linked oxidoreductase phqH (or the cytochrome P450 monooxygenase phqM), are proposed to be involved in the formation of the pyran ring. The FAD-dependent monooxygenase phqK is likely responsible for generation of the spiro-oxindole, and the N-methylation is likely mediated by the phqN methyltransferase leading to the isolable natural product paraherquamide F. However, the order of these biosynthetic steps has still to be determined. In late-stage paraherquamide biosynthesis, the third P450 monooxygenase, phqO, is probably responsible for the C-14 hydroxylation, transforming paraherquamide F to paraherquamide G, and paraherquamide E to the final product paraherquamide A. The expansion from the 6-membered ring pyran (in paraherquamides F and G) to the 7-membered dioxepin ring (in paraherquamides A and E) represents a poorly understood but intriguing process that probably involves the 2-oxoglutarate-dependent dioxygenase phqC. Finally, the remaining members of the paraherquamide cluster, including phqI as well as phqM (or phqH), do not have a clearly prescribed role and appear to be redundant. This is Pyrroline-5-carboxylate reductase from Penicillium fellutanum.